Reading from the N-terminus, the 243-residue chain is PF03932 family protein CutC (243 aa).

The protein belongs to the CutC family.

Its subcellular location is the cytoplasm. In Glaesserella parasuis serovar 5 (strain SH0165) (Haemophilus parasuis), this protein is PF03932 family protein CutC.